The chain runs to 436 residues: GDP-mannose 6-dehydrogenase (436 aa).

NAD(+) is bound by residues tyrosine 10, valine 11, aspartate 30, lysine 35, threonine 86, and threonine 124. The GDP-alpha-D-mannuronate site is built by glutamate 161, lysine 210, asparagine 214, histidine 217, asparagine 225, tyrosine 256, tyrosine 257, arginine 259, phenylalanine 262, and glycine 265. The active-site Nucleophile is the cysteine 268. Lysine 271 is a binding site for NAD(+). Residues 278–295 (YRASQLDVEHPMLGSLMR) are inter-domain linker. Lysine 324 is a GDP-alpha-D-mannuronate binding site. Arginine 331 contacts NAD(+).

Belongs to the UDP-glucose/GDP-mannose dehydrogenase family. As to quaternary structure, forms a domain-swapped dimer with each peptide contributing to each active site. The dimers assemble further. X-ray structures indicate this enzyme exists as a homotetramer PubMed:12705829, but kinetic and physical results obtained in PubMed:2470755 and PubMed:12135385 indicate that it is probably a homohexamer.

The enzyme catalyses GDP-alpha-D-mannose + 2 NAD(+) + H2O = GDP-alpha-D-mannuronate + 2 NADH + 3 H(+). It functions in the pathway glycan biosynthesis; alginate biosynthesis. With respect to regulation, inhibited by GMP, ATP, GDP-D-glucose and maltose. Inhibited by GMP and deamidoNAD. Functionally, catalyzes the oxidation of guanosine diphospho-D-mannose (GDP-D-mannose) to GDP-D-mannuronic acid, a precursor for alginate polymerization. The alginate layer causes a mucoid phenotype and provides a protective barrier against host immune defenses and antibiotics. Other sugars are not used as substrates. In Pseudomonas aeruginosa (strain ATCC 15692 / DSM 22644 / CIP 104116 / JCM 14847 / LMG 12228 / 1C / PRS 101 / PAO1), this protein is GDP-mannose 6-dehydrogenase.